The following is a 744-amino-acid chain: Biotin sulfoxide reductase (744 aa).

Ser-121 contributes to the Mo-bis(molybdopterin guanine dinucleotide) binding site.

Belongs to the prokaryotic molybdopterin-containing oxidoreductase family. Mo-bis(molybdopterin guanine dinucleotide) is required as a cofactor.

In terms of biological role, this enzyme may serve as a scavenger, allowing the cell to utilize biotin sulfoxide as a biotin source. It reduces a spontaneous oxidation product of biotin, D-biotin D-sulfoxide (BSO or BDS), back to biotin. This Cereibacter sphaeroides (Rhodobacter sphaeroides) protein is Biotin sulfoxide reductase.